The primary structure comprises 210 residues: LexA repressor (210 aa).

Positions 31-51 form a DNA-binding region, H-T-H motif; the sequence is RVEISKELGFRSPNAAEEHLK. Catalysis depends on for autocatalytic cleavage activity residues S126 and K163.

Belongs to the peptidase S24 family. Homodimer.

It carries out the reaction Hydrolysis of Ala-|-Gly bond in repressor LexA.. In terms of biological role, represses a number of genes involved in the response to DNA damage (SOS response), including recA and lexA. In the presence of single-stranded DNA, RecA interacts with LexA causing an autocatalytic cleavage which disrupts the DNA-binding part of LexA, leading to derepression of the SOS regulon and eventually DNA repair. This is LexA repressor from Histophilus somni (strain 129Pt) (Haemophilus somnus).